A 202-amino-acid chain; its full sequence is Nucleoside triphosphate pyrophosphatase (202 aa).

Aspartate 79 functions as the Proton acceptor in the catalytic mechanism.

It belongs to the Maf family. A divalent metal cation is required as a cofactor.

The protein localises to the cytoplasm. It carries out the reaction a ribonucleoside 5'-triphosphate + H2O = a ribonucleoside 5'-phosphate + diphosphate + H(+). The catalysed reaction is a 2'-deoxyribonucleoside 5'-triphosphate + H2O = a 2'-deoxyribonucleoside 5'-phosphate + diphosphate + H(+). Its function is as follows. Nucleoside triphosphate pyrophosphatase. May have a dual role in cell division arrest and in preventing the incorporation of modified nucleotides into cellular nucleic acids. This chain is Nucleoside triphosphate pyrophosphatase, found in Rhodopseudomonas palustris (strain HaA2).